Reading from the N-terminus, the 248-residue chain is Ubiquinone biosynthesis O-methyltransferase (248 aa).

Residues arginine 40, glycine 71, aspartate 92, and methionine 135 each contribute to the S-adenosyl-L-methionine site.

The protein belongs to the methyltransferase superfamily. UbiG/COQ3 family.

It carries out the reaction a 3-demethylubiquinol + S-adenosyl-L-methionine = a ubiquinol + S-adenosyl-L-homocysteine + H(+). The catalysed reaction is a 3-(all-trans-polyprenyl)benzene-1,2-diol + S-adenosyl-L-methionine = a 2-methoxy-6-(all-trans-polyprenyl)phenol + S-adenosyl-L-homocysteine + H(+). Its pathway is cofactor biosynthesis; ubiquinone biosynthesis. In terms of biological role, O-methyltransferase that catalyzes the 2 O-methylation steps in the ubiquinone biosynthetic pathway. This Ruegeria pomeroyi (strain ATCC 700808 / DSM 15171 / DSS-3) (Silicibacter pomeroyi) protein is Ubiquinone biosynthesis O-methyltransferase.